The primary structure comprises 446 residues: Tetratricopeptide repeat protein 23 (446 aa).

TPR repeat units follow at residues 45–78 (LHLC…TKIC), 137–170 (LELF…SKEM), 186–219 (SRIK…TETT), and 356–389 (AETY…ETFL).

In terms of assembly, associated with the EvC complex composed of EFCAB7, IQCE, EVC2 and EVC.

Its subcellular location is the cell projection. It is found in the cilium. In terms of biological role, participates positively in the ciliary Hedgehog (Hh) signaling. This Rattus norvegicus (Rat) protein is Tetratricopeptide repeat protein 23 (Ttc23).